The sequence spans 238 residues: 2-C-methyl-D-erythritol 4-phosphate cytidylyltransferase (238 aa).

Belongs to the IspD/TarI cytidylyltransferase family. IspD subfamily.

It catalyses the reaction 2-C-methyl-D-erythritol 4-phosphate + CTP + H(+) = 4-CDP-2-C-methyl-D-erythritol + diphosphate. Its pathway is isoprenoid biosynthesis; isopentenyl diphosphate biosynthesis via DXP pathway; isopentenyl diphosphate from 1-deoxy-D-xylulose 5-phosphate: step 2/6. In terms of biological role, catalyzes the formation of 4-diphosphocytidyl-2-C-methyl-D-erythritol from CTP and 2-C-methyl-D-erythritol 4-phosphate (MEP). This is 2-C-methyl-D-erythritol 4-phosphate cytidylyltransferase from Salinibacter ruber (strain DSM 13855 / M31).